A 727-amino-acid chain; its full sequence is Protein EXECUTER 1, chloroplastic (727 aa).

Disordered stretches follow at residues 1 to 51, 65 to 102, 340 to 381, and 413 to 455; these read MAAA…SRLF, LAGA…AGSG, ISSS…LPSD, and DEDD…SGDE. Residues 1 to 83 constitute a chloroplast transit peptide; that stretch reads MAAAVSTAPR…PRRRVSSVVR (83 aa). Composition is skewed to low complexity over residues 19–33 and 42–51; these read SSSC…ASMS and PSSGSGSRLF. A compositionally biased stretch (acidic residues) spans 413–441; that stretch reads DEDDENDNPEDEIESSEDIGDGDNVEEAE.

It localises to the plastid. The protein resides in the chloroplast. Functionally, together with EX2, enables higher plants to perceive singlet oxygen as a stress signal in plastid that activates a genetically determined nuclear stress response program which triggers a programmed cell death (PCD). This transfer of singlet oxygen-induced stress-related signals from the plastid to the nucleus that triggers genetically controlled PCD pathway is unique to photosynthetic eukaryotes and operates under mild stress conditions, impeding photosystem II (PSII) without causing photooxidative damage of the plant. The sequence is that of Protein EXECUTER 1, chloroplastic from Oryza sativa subsp. japonica (Rice).